The primary structure comprises 99 residues: Cytochrome c oxidase subunit 4 isoform 1, mitochondrial (99 aa).

Residues 1-73 lie on the Mitochondrial matrix side of the membrane; that stretch reads SVVKREDFSL…TFAEMNRGSN (73 aa). The residue at position 4 (Lys-4) is an N6-acetyllysine; alternate. N6-succinyllysine; alternate is present on Lys-4. Lys-28 carries the post-translational modification N6-acetyllysine. Phosphoserine is present on residues Ser-31 and Ser-33. Lys-35 carries the post-translational modification N6-acetyllysine; alternate. Lys-35 carries the post-translational modification N6-succinyllysine; alternate. Lys-42 is subject to N6-acetyllysine. A helical membrane pass occupies residues 74–99; that stretch reads EWKTVVGTATFFIGFTALIIMWQKRY.

This sequence belongs to the cytochrome c oxidase IV family. In terms of assembly, component of the cytochrome c oxidase (complex IV, CIV), a multisubunit enzyme composed of 14 subunits. The complex is composed of a catalytic core of 3 subunits MT-CO1, MT-CO2 and MT-CO3, encoded in the mitochondrial DNA, and 11 supernumerary subunits COX4I, COX5A, COX5B, COX6A, COX6B, COX6C, COX7A, COX7B, COX7C, COX8 and NDUFA4, which are encoded in the nuclear genome. The complex exists as a monomer or a dimer and forms supercomplexes (SCs) in the inner mitochondrial membrane with NADH-ubiquinone oxidoreductase (complex I, CI) and ubiquinol-cytochrome c oxidoreductase (cytochrome b-c1 complex, complex III, CIII), resulting in different assemblies (supercomplex SCI(1)III(2)IV(1) and megacomplex MCI(2)III(2)IV(2)). Interacts with PHB2; the interaction decreases in absence of SPHK2. Interacts with AFG1L. Interacts with ABCB7; this interaction allows the regulation of cellular iron homeostasis and cellular reactive oxygen species (ROS) levels in cardiomyocytes. Interacts with FLVCR2; this interaction occurs in the absence of heme and is disrupted upon heme binding. Interacts with IRGC.

Its subcellular location is the mitochondrion inner membrane. It participates in energy metabolism; oxidative phosphorylation. Component of the cytochrome c oxidase, the last enzyme in the mitochondrial electron transport chain which drives oxidative phosphorylation. The respiratory chain contains 3 multisubunit complexes succinate dehydrogenase (complex II, CII), ubiquinol-cytochrome c oxidoreductase (cytochrome b-c1 complex, complex III, CIII) and cytochrome c oxidase (complex IV, CIV), that cooperate to transfer electrons derived from NADH and succinate to molecular oxygen, creating an electrochemical gradient over the inner membrane that drives transmembrane transport and the ATP synthase. Cytochrome c oxidase is the component of the respiratory chain that catalyzes the reduction of oxygen to water. Electrons originating from reduced cytochrome c in the intermembrane space (IMS) are transferred via the dinuclear copper A center (CU(A)) of subunit 2 and heme A of subunit 1 to the active site in subunit 1, a binuclear center (BNC) formed by heme A3 and copper B (CU(B)). The BNC reduces molecular oxygen to 2 water molecules using 4 electrons from cytochrome c in the IMS and 4 protons from the mitochondrial matrix. The polypeptide is Cytochrome c oxidase subunit 4 isoform 1, mitochondrial (COX4I1) (Trachypithecus cristatus (Silvered leaf-monkey)).